The primary structure comprises 570 residues: Interleukin-1 receptor accessory protein (570 aa).

An N-terminal signal peptide occupies residues 1–20; it reads MGLPWCLMSLFFCGILQSHA. Ig-like C2-type domains follow at residues 21 to 128, 141 to 230, and 243 to 348; these read SERC…VAFP, PMRL…RTMT, and PHIY…AKVK. Over 21-367 the chain is Extracellular; that stretch reads SERCDDWGLD…VELACGFGAT (347 aa). Cystine bridges form between Cys24–Cys122, Cys47–Cys114, Cys137–Cys181, Cys160–Cys212, and Cys266–Cys332. Asn57 carries N-linked (GlcNAc...) asparagine glycosylation. The segment at 69-85 is essential for interaction with PTPRD; the sequence is IWYWTRQDRDLEEPINF. 6 N-linked (GlcNAc...) asparagine glycosylation sites follow: Asn107, Asn111, Asn118, Asn157, Asn196, and Asn209. A helical membrane pass occupies residues 368–388; that stretch reads VFLVVVLIVVYHVYWLEMVLF. Over 389 to 570 the chain is Cytoplasmic; it reads YRAHFGTDET…GLSYSSLKNV (182 aa). The TIR domain occupies 403 to 546; that stretch reads KEYDIYVSYA…RFWKQLQVAM (144 aa). The active site involves Glu482. Residues 550–570 are disordered; the sequence is KSPRWSSSDKQGLSYSSLKNV. Polar residues predominate over residues 553-570; that stretch reads RWSSSDKQGLSYSSLKNV. A Phosphoserine modification is found at Ser557.

The protein belongs to the interleukin-1 receptor family. As to quaternary structure, the interleukin-36 receptor complex is a heterodimer of IL1RL2 and IL1RAP; the association is inhibited by IL36RN. The interleukin-1 receptor complex is a heterodimer of IL1R1 and IL1RAP. Associates with IL1R2 to form a non-signaling interleukin-1 receptor complex. Interacts with IL-33-bound IL1RL1 to form the minimal interleukin-33 signaling complex with a 1:1:1 stoichiometry. Interacts with KIT (independently of stimulation with KITLG/SCF). A mast cell-specific KITLG/SCF-induced interleukin-33 signaling complex contains IL1RL1, IL1RAP, KIT and MYD88. Interacts (via the first immunoglobilin domain) with PTPRD (via the third immunoglobilin domain); induces pre- and postsynaptic differentiation of neurons. As to expression, highly expressed in hypothalamus, in the dentate gyrus of hippocampus, cerebral cortex, cerebellum, liver and lung.

It is found in the membrane. The catalysed reaction is NAD(+) + H2O = ADP-D-ribose + nicotinamide + H(+). Functionally, coreceptor for IL1RL2 in the IL-36 signaling system. Coreceptor with IL1R1 in the IL-1 signaling system. Associates with IL1R1 bound to IL1B to form the high affinity interleukin-1 receptor complex which mediates interleukin-1-dependent activation of NF-kappa-B and other pathways. Signaling involves the recruitment of adapter molecules such as TOLLIP, MYD88, and IRAK1 or IRAK2 via the respective TIR domains of the receptor/coreceptor subunits. Recruits TOLLIP to the signaling complex. Does not bind to interleukin-1 alone; binding of IL1RN to IL1R1, prevents its association with IL1R1 to form a signaling complex. The cellular response is modulated through a non-signaling association with the membrane IL1R2 decoy receptor. Coreceptor for IL1RL1 in the IL-33 signaling system. Can bidirectionally induce pre- and postsynaptic differentiation of neurons by trans-synaptically binding to PTPRD. May play a role in IL1B-mediated costimulation of IFNG production from T-helper 1 (Th1) cells. This chain is Interleukin-1 receptor accessory protein (Il1rap), found in Rattus norvegicus (Rat).